The sequence spans 685 residues: Phenoloxidase subunit 1 (685 aa).

The propeptide occupies 1-51 (MSDAKNNLLLFFDRPSEPCFMQKGEENAVFEIPDNYYPEKYQRVSNAIGNR). N-linked (GlcNAc...) asparagine glycosylation occurs at asparagine 184. Positions 209, 213, and 239 each coordinate Cu cation. Asparagine 254 and asparagine 324 each carry an N-linked (GlcNAc...) asparagine glycan. Glutamate 351 serves as the catalytic Proton acceptor. 3 residues coordinate Cu cation: histidine 366, histidine 370, and histidine 406. 2 N-linked (GlcNAc...) asparagine glycosylation sites follow: asparagine 491 and asparagine 540. 2 disulfide bridges follow: cysteine 581–cysteine 623 and cysteine 583–cysteine 630.

Heterodimer. Cu(2+) is required as a cofactor. The N-terminus is blocked. Synthesized by hemocytes and released into the hemolymph plasma.

The protein resides in the secreted. The catalysed reaction is 2 L-dopa + O2 = 2 L-dopaquinone + 2 H2O. It carries out the reaction L-tyrosine + O2 = L-dopaquinone + H2O. In terms of biological role, this is a copper-containing oxidase that functions in the formation of pigments such as melanins and other polyphenolic compounds. Catalyzes the rate-limiting conversions of tyrosine to DOPA, DOPA to DOPA-quinone and possibly 5,6 dihydroxyindole to indole-5'6 quinone. This Bombyx mori (Silk moth) protein is Phenoloxidase subunit 1.